Consider the following 393-residue polypeptide: G protein-activated inward rectifier potassium channel 3 (393 aa).

Residues 1–23 (MAQENAAFSPGSEEPPRRRGRQR) are disordered. Topologically, residues 1–57 (MAQENAAFSPGSEEPPRRRGRQRYVEKDGRCNVQQGNVRETYRYLTDLFTTLVDLQW) are cytoplasmic. A helical transmembrane segment spans residues 58–82 (RLSLLFFVLAYALTWLFFGAIWWLI). Residues 83–106 (AYGRGDLEHLEDTAWTPCVNNLNG) are Extracellular-facing. An intramembrane region (helical; Pore-forming) is located at residues 107 to 118 (FVAAFLFSIETE). The pore-forming intramembrane region spans 119 to 125 (TTIGYGH). The Selectivity filter signature appears at 120-125 (TIGYGH). Topologically, residues 126–134 (RVITDQCPE) are extracellular. Residues 135–156 (GIVLLLLQAILGSMVNAFMVGC) traverse the membrane as a helical segment. Topologically, residues 157–393 (MFVKISQPNK…LPPPESESKV (237 aa)) are cytoplasmic. The tract at residues 360–393 (KVEEEGAGEGAGAGDGADKEHNGCLPPPESESKV) is disordered. Positions 384-393 (LPPPESESKV) are enriched in pro residues. A PDZ-binding motif is present at residues 390 to 393 (ESKV).

This sequence belongs to the inward rectifier-type potassium channel (TC 1.A.2.1) family. KCNJ9 subfamily. As to quaternary structure, associates with KCNJ3/GIRK1 to form a G-protein-activated heteromultimer pore-forming unit. Interacts (via PDZ-binding motif) with SNX27 (via PDZ domain); the interaction is required when endocytosed to prevent degradation in lysosomes and promote recycling to the plasma membrane. As to expression, expressed mainly in the brain, some expression in the skeletal muscle.

The protein localises to the membrane. It carries out the reaction K(+)(in) = K(+)(out). Functionally, inward rectifier potassium channels are characterized by a greater tendency to allow potassium to flow into the cell rather than out of it. Their voltage dependence is regulated by the concentration of extracellular potassium; as external potassium is raised, the voltage range of the channel opening shifts to more positive voltages. The inward rectification is mainly due to the blockage of outward current by internal magnesium. This receptor is controlled by G proteins. Unable to produce channel activity when expressed alone. Forms a functional channel in association with KCNJ3/GIRK1. This is G protein-activated inward rectifier potassium channel 3 (Kcnj9) from Mus musculus (Mouse).